A 127-amino-acid polypeptide reads, in one-letter code: Transthyretin (127 aa).

C10 carries the sulfocysteine modification. Position 15 (K15) interacts with L-thyroxine. E42 carries the 4-carboxyglutamate modification. An L-thyroxine-binding site is contributed by E54. The N-linked (GlcNAc...) asparagine glycan is linked to N98. S117 serves as a coordination point for L-thyroxine.

The protein belongs to the transthyretin family. As to quaternary structure, homotetramer. Dimer of dimers. In the homotetramer, subunits assemble around a central channel that can accommodate two ligand molecules. Interacts with RBP4. Post-translationally, sulfonation of the reactive cysteine Cys-10 enhances the stability of the native conformation of TTR, avoiding misassembly of the protein leading to amyloid formation. As to expression, detected in serum (at protein level).

The protein resides in the secreted. Thyroid hormone-binding protein. Probably transports thyroxine from the bloodstream to the brain. The polypeptide is Transthyretin (TTR) (Oryctolagus cuniculus (Rabbit)).